We begin with the raw amino-acid sequence, 142 residues long: Large ribosomal subunit protein uL16 (142 aa).

The protein belongs to the universal ribosomal protein uL16 family. In terms of assembly, part of the 50S ribosomal subunit.

Its function is as follows. Binds 23S rRNA and is also seen to make contacts with the A and possibly P site tRNAs. The sequence is that of Large ribosomal subunit protein uL16 from Phenylobacterium zucineum (strain HLK1).